A 31-amino-acid chain; its full sequence is Kappa-theraphotoxin-Ps1b (31 aa).

Intrachain disulfides connect Cys2/Cys16, Cys9/Cys21, and Cys15/Cys25. Methionine amide is present on Met31.

Belongs to the neurotoxin 30 (phrixotoxin) family. Expressed by the venom gland.

It localises to the secreted. Its function is as follows. Potent and specific blocker of Kv4.2/KCND2 (IC(50)=34 nM) and Kv4.3/KCND3 (IC(50)=71 nM) potassium channels. Acts by altering the gating properties of these channels. This is Kappa-theraphotoxin-Ps1b from Paraphysa scrofa (Chilean copper tarantula).